Consider the following 186-residue polypeptide: MSEGIDIKELKRRMDGAVSAFKSDIASLRTGRASANILDPVTIEAYGSRVPLNQVANITVPEPRMLTVSVWDKSMVSAVERGIRESNLGLNPIVDGQSLRIPLPELNEERRKSLVKVAHDYAEKSKVAIRHVRRDGMDGLKKAEKDGVIGQDESRAQSERVQKMTDETISEIDRLLGEKEKEIMQV.

The disordered stretch occupies residues 144-163 (EKDGVIGQDESRAQSERVQK).

The protein belongs to the RRF family.

It localises to the cytoplasm. In terms of biological role, responsible for the release of ribosomes from messenger RNA at the termination of protein biosynthesis. May increase the efficiency of translation by recycling ribosomes from one round of translation to another. The polypeptide is Ribosome-recycling factor (Rhizobium etli (strain CIAT 652)).